The primary structure comprises 544 residues: 4-coumarate--CoA ligase 1 (544 aa).

Residues Ser190, Ser191, Gly192, Thr193, Thr194, and Lys198 each contribute to the ATP site. Tyr240 provides a ligand contact to (E)-4-coumaroyl-AMP. Lys261 serves as a coordination point for CoA. The tract at residues 263-332 (DIVPFLELIQ…AKFPNAKLGQ (70 aa)) is SBD1. (E)-4-coumaroyl-AMP-binding residues include Ala310, Gln332, Gly333, Thr337, and Met345. The ATP site is built by Gln332, Gly333, and Thr337. The tract at residues 333–400 (GYGMTEAGPV…IRGDQIMKGY (68 aa)) is SBD2. Residues Asp421 and Arg436 each coordinate ATP. Positions 438 and 442 each coordinate (E)-4-coumaroyl-AMP. CoA contacts are provided by Lys444 and Gly445. Position 527 (Lys527) interacts with ATP.

It belongs to the ATP-dependent AMP-binding enzyme family. Mg(2+) is required as a cofactor.

The catalysed reaction is (E)-4-coumarate + ATP + CoA = (E)-4-coumaroyl-CoA + AMP + diphosphate. It carries out the reaction (E)-4-coumarate + ATP + H(+) = (E)-4-coumaroyl-AMP + diphosphate. The enzyme catalyses (E)-4-coumaroyl-AMP + CoA = (E)-4-coumaroyl-CoA + AMP + H(+). The protein operates within phytoalexin biosynthesis; 3,4',5-trihydroxystilbene biosynthesis; 3,4',5-trihydroxystilbene from trans-4-coumarate: step 1/2. Functionally, carboxylate--CoA ligase that may use 4-coumarate as substrate. Follows a two-step reaction mechanism, wherein the carboxylate substrate first undergoes adenylation by ATP, followed by a thioesterification in the presence of CoA to yield the final CoA thioester. The chain is 4-coumarate--CoA ligase 1 (4CL1) from Petroselinum crispum (Parsley).